The sequence spans 325 residues: NADH-quinone oxidoreductase subunit H (325 aa).

Helical transmembrane passes span 11-31 (ILIS…CGAF), 81-101 (VIFT…FAIV), 114-134 (IGIL…LFAG), 149-169 (ASAQ…GVVA), 186-206 (MWNV…GVAV), 237-257 (FFVG…TLFF), 265-285 (LPPF…FILI), and 304-324 (VCLP…LYNA).

The protein belongs to the complex I subunit 1 family. As to quaternary structure, NDH-1 is composed of 13 different subunits. Subunits NuoA, H, J, K, L, M, N constitute the membrane sector of the complex.

Its subcellular location is the cell inner membrane. It catalyses the reaction a quinone + NADH + 5 H(+)(in) = a quinol + NAD(+) + 4 H(+)(out). In terms of biological role, NDH-1 shuttles electrons from NADH, via FMN and iron-sulfur (Fe-S) centers, to quinones in the respiratory chain. The immediate electron acceptor for the enzyme in this species is believed to be ubiquinone. Couples the redox reaction to proton translocation (for every two electrons transferred, four hydrogen ions are translocated across the cytoplasmic membrane), and thus conserves the redox energy in a proton gradient. This subunit may bind ubiquinone. This chain is NADH-quinone oxidoreductase subunit H, found in Serratia proteamaculans (strain 568).